The sequence spans 1749 residues: Kinesin-like protein KIF13A (1749 aa).

The region spanning 5-352 (KVKVAVRVRP…LRYADRAKRI (348 aa)) is the Kinesin motor domain. Residue 102-109 (GQTGSGKS) participates in ATP binding. Positions 359–431 (NEDPNAKVIR…QERQRQLESM (73 aa)) form a coiled coil. The region spanning 469 to 519 (HTRVGADTSQDIQLFGIGIQPEHCEIDIAADGDITLTPKENARSCVNGTLV) is the FHA domain. Residues 552 to 775 (LKDFERETSS…VPEAKRLYGK (224 aa)) adopt a coiled-coil conformation. Disordered regions lie at residues 633-652 (QQLSPERQPPSSASDRLAYS) and 834-853 (IPERMAEDDSSENSSESGSL). Ser636 is subject to Phosphoserine. The stretch at 1086–1126 (SDALIKRREYLDEQIKKVSNKKEKTEDDMEREARLVEQWVG) forms a coiled coil. The residue at position 1274 (Ser1274) is a Phosphoserine. Over residues 1370–1383 (LSTPNVHNVSSSRP) the composition is skewed to polar residues. Disordered stretches follow at residues 1370–1402 (LSTPNVHNVSSSRPDLSGFDEDDKGWPENQLDV) and 1417–1436 (TLPRDSPRRSKEGCPSENPH). The span at 1421–1430 (DSPRRSKEGC) shows a compositional bias: basic and acidic residues. Phosphoserine is present on residues Ser1441, Ser1477, Ser1481, Ser1524, Ser1600, and Ser1650. A coiled-coil region spans residues 1475-1499 (LLSQEDSEEEENELEALSRKLMLTQ). Disordered stretches follow at residues 1584–1665 (CAEP…GHQA) and 1698–1749 (DFDG…TATR). Residues 1719-1741 (ETDHKGIPERPPDADRLHPKIEN) are compositionally biased toward basic and acidic residues.

Belongs to the TRAFAC class myosin-kinesin ATPase superfamily. Kinesin family. In terms of assembly, interacts with AP1G1 and AP1G2. Interacts with ZFYVE26. Interacts with AP2B1.

The protein localises to the golgi apparatus membrane. The protein resides in the cytoplasm. It localises to the cytoskeleton. It is found in the microtubule organizing center. Its subcellular location is the centrosome. The protein localises to the midbody. The protein resides in the endosome membrane. Plus end-directed microtubule-dependent motor protein involved in intracellular transport and regulating various processes such as mannose-6-phosphate receptor (M6PR) transport to the plasma membrane, endosomal sorting during melanosome biogenesis and cytokinesis. During melanosome maturation, required for delivering melanogenic enzymes from recycling endosomes to nascent melanosomes by creating peripheral recycling endosomal subdomains in melanocytes. Also required for the abscission step in cytokinesis: mediates translocation of ZFYVE26, and possibly TTC19, to the midbody during cytokinesis. Mediates the transport of M6PR-containing vesicles from trans-Golgi network to the plasma membrane via direct interaction with the AP-1 complex. The sequence is that of Kinesin-like protein KIF13A (Kif13a) from Mus musculus (Mouse).